Here is a 300-residue protein sequence, read N- to C-terminus: uncharacterized protein (300 aa).

2 disordered regions span residues 167 to 186 (DVFL…HHEH) and 224 to 244 (ADGS…DASH). Positions 224–236 (ADGSSLETSSMSS) are enriched in polar residues.

This is an uncharacterized protein from Rattus norvegicus (Rat).